A 500-amino-acid chain; its full sequence is UBX domain-containing protein 5 (500 aa).

The span at 50–61 (SNNTPTPSNSTP) shows a compositional bias: low complexity. The interval 50-70 (SNNTPTPSNSTPMAPTSVDSD) is disordered. Ser-139 is modified (phosphoserine). 2 disordered regions span residues 142–169 (NQRL…EEND) and 371–399 (ESLN…QEPD). Over residues 148 to 161 (TNTNTYINDNSSDS) the composition is skewed to low complexity. Residues 415 to 493 (KPGITTRIQI…GLKNSSLLLE (79 aa)) form the UBX domain.

As to quaternary structure, interacts with CDC48.

It is found in the nucleus. The protein resides in the cytoplasm. In terms of biological role, involved in CDC48-dependent protein degradation through the ubiquitin/proteasome pathway. The chain is UBX domain-containing protein 5 (UBX5) from Saccharomyces cerevisiae (strain ATCC 204508 / S288c) (Baker's yeast).